The chain runs to 36 residues: Pancreatic polypeptide (36 aa).

Tyr36 carries the tyrosine amide modification.

The protein belongs to the NPY family.

Its subcellular location is the secreted. In terms of biological role, hormone secreted by pancreatic cells that acts as a regulator of pancreatic and gastrointestinal functions probably by signaling through the G protein-coupled receptor NPY4R2. The sequence is that of Pancreatic polypeptide (PPY) from Chinchilla chinchilla (Short-tailed chinchilla).